A 315-amino-acid polypeptide reads, in one-letter code: MASLNKLSSNEIGNIDRQIAKLRQGQILTEQEVKSLCIKAKEILQDEPNIIQVRAPLTICGDIHGQFHDLIELFQIGGNLPDTNYLFLGDYVDRGSQSVETFSLMLSLKVRYKDRIVLLRGNHENREINKIYGFYDECFRKYGNEIVWKQFTEVFGYLPLSAIVEQQIFCAHGGLSPAMESVDQIKQLNRVQDIPHEGLMCDLLWSDPEETKNGWGISPRGAGWTWGCDITEKFLHSNKLKQIARAHQLVMEGIQKVHNQKTITIFSAPNYCYRCGNQACIVEVDEQLKMNQTQFEPAPRENEPHTTRRVPDYFL.

Positions 62, 64, 90, and 122 each coordinate Mn(2+). His123 (proton donor) is an active-site residue. Residues His172 and His247 each coordinate Mn(2+). Positions 294 to 315 (QFEPAPRENEPHTTRRVPDYFL) are disordered. Over residues 298–315 (APRENEPHTTRRVPDYFL) the composition is skewed to basic and acidic residues. Leu315 is modified (leucine methyl ester).

The protein belongs to the PPP phosphatase family. PP-2A subfamily. Mn(2+) is required as a cofactor. Post-translationally, reversibly methyl esterified on Leu-315 by leucine carboxyl methyltransferase 1 (PPM1) and protein phosphatase methylesterase 1 (PPE1). Carboxyl methylation influences the affinity of the catalytic subunit for the different regulatory subunits, thereby modulating the PP2A holoenzyme's substrate specificity, enzyme activity and cellular localization.

It catalyses the reaction O-phospho-L-seryl-[protein] + H2O = L-seryl-[protein] + phosphate. The catalysed reaction is O-phospho-L-threonyl-[protein] + H2O = L-threonyl-[protein] + phosphate. The sequence is that of Serine/threonine-protein phosphatase PP2A catalytic subunit 2 (Ppn2) from Paramecium tetraurelia.